Consider the following 103-residue polypeptide: Putative inactive recombination-promoting nuclease-like protein YjiP (103 aa).

It belongs to the Rpn/YhgA-like nuclease family.

Its function is as follows. This pseudogene is the N-terminal fragment of low activity DNA endonuclease RpnD which probably yields 3'-hydroxyl ends. The intact protein can be seen in this entry (AC B7NGZ6). Expression of the repaired protein increases the frequency of recA-independent recombination, but also decreases viability probably via DNA damage; in a RecA strain expression has no effect on viability but does induce the SOS repair response. May play a role in horizontal gene transfer. This chain is Putative inactive recombination-promoting nuclease-like protein YjiP (yjiP), found in Escherichia coli (strain K12).